Consider the following 412-residue polypeptide: Branched-chain alpha-ketoacid dehydrogenase kinase (412 aa).

A mitochondrion-targeting transit peptide spans 1-30; sequence MILASVLRSGPGGGLPLRPLLGPALALRAR. Phosphoserine is present on serine 31. Residue serine 52 is modified to Phosphoserine; by autocatalysis. The 246-residue stretch at 159–404 folds into the Histidine kinase domain; sequence LDDHKDVVTL…DVYLRLRHID (246 aa). 2 positions are modified to N6-acetyllysine: lysine 192 and lysine 233. The ATP site is built by asparagine 279 and aspartate 315. Residue asparagine 279 participates in Mg(2+) binding. Valine 328, aspartate 330, and phenylalanine 333 together coordinate K(+). 2 residues coordinate ATP: threonine 334 and threonine 335. Serine 356 and serine 360 each carry phosphoserine. ATP contacts are provided by histidine 364, glycine 367, and leucine 370. Glycine 367 contacts K(+).

It belongs to the PDK/BCKDK protein kinase family. In terms of assembly, homodimer. Homotetramer. Dimerizes through interaction of two opposing nucleotide-binding domains. Interacts with E2 component of the branched-chain alpha-ketoacid dehydrogenase (BCKDH) complex. Competes with BCKDK for binding to the E2 component; this interaction is modulated by branched-chain alpha-keto acids. At steady state, BCKDH holoenzyme contains BCKDK and BCKDHA is phosphorylated. In response to high levels of branched-chain alpha-keto acids, the inhibitory BCKDK is replaced by activating PPM1K leading to BCKDHA dephosphorylation and BCAA degradation. Autophosphorylated. Ubiquitous.

The protein resides in the mitochondrion matrix. It catalyses the reaction L-seryl-[3-methyl-2-oxobutanoate dehydrogenase] + ATP = O-phospho-L-seryl-[3-methyl-2-oxobutanoate dehydrogenase] + ADP + H(+). The catalysed reaction is L-seryl-[protein] + ATP = O-phospho-L-seryl-[protein] + ADP + H(+). It functions in the pathway protein modification. Its activity is regulated as follows. Allosterically inhibited by certain thiazoles and thiophenes: thiazoles increase interaction with DBT/BCKDH-E2, whereas thiophenes reduce this interaction. Inhibited by 3,6- dichlorobenzo[b]thiophene-2-carboxylic acid (BT2). The ATP binding is mediated by both potassium and magnesium ions. Its function is as follows. Serine/threonine-protein kinase component of macronutrients metabolism. Forms a functional kinase and phosphatase pair with PPM1K, serving as a metabolic regulatory node that coordinates branched-chain amino acids (BCAAs) with glucose and lipid metabolism via two distinct phosphoprotein targets: mitochondrial BCKDHA subunit of the branched-chain alpha-ketoacid dehydrogenase (BCKDH) complex and cytosolic ACLY, a lipogenic enzyme of Krebs cycle. Phosphorylates and inactivates mitochondrial BCKDH complex a multisubunit complex consisting of three multimeric components each involved in different steps of BCAA catabolism: E1 composed of BCKDHA and BCKDHB, E2 core composed of DBT monomers, and E3 composed of DLD monomers. Associates with the E2 component of BCKDH complex and phosphorylates BCKDHA on Ser-337, leading to conformational changes that interrupt substrate channeling between E1 and E2 and inactivates the BCKDH complex. Phosphorylates ACLY on Ser-455 in response to changes in cellular carbohydrate abundance such as occurs during fasting to feeding metabolic transition. Refeeding stimulates MLXIPL/ChREBP transcription factor, leading to increased BCKDK to PPM1K expression ratio, phosphorylation and activation of ACLY that ultimately results in the generation of malonyl-CoA and oxaloacetate immediate substrates of de novo lipogenesis and glucogenesis, respectively. Recognizes phosphosites having SxxE/D canonical motif. This chain is Branched-chain alpha-ketoacid dehydrogenase kinase, found in Homo sapiens (Human).